The primary structure comprises 367 residues: 7,8-didemethyl-8-hydroxy-5-deazariboflavin synthase (367 aa).

The 237-residue stretch at 39–275 (LTFARNVFVP…AEVGVQVPPN (237 aa)) folds into the Radical SAM core domain. Residues cysteine 53, cysteine 57, and cysteine 60 each contribute to the [4Fe-4S] cluster site.

Belongs to the radical SAM superfamily. CofG family. As to quaternary structure, consists of two subunits, CofG and CofH. Requires [4Fe-4S] cluster as cofactor.

It carries out the reaction 5-amino-5-(4-hydroxybenzyl)-6-(D-ribitylimino)-5,6-dihydrouracil + S-adenosyl-L-methionine = 7,8-didemethyl-8-hydroxy-5-deazariboflavin + 5'-deoxyadenosine + L-methionine + NH4(+) + H(+). The protein operates within cofactor biosynthesis; coenzyme F0 biosynthesis. Its function is as follows. Catalyzes the radical-mediated synthesis of 7,8-didemethyl-8-hydroxy-5-deazariboflavin from 5-amino-5-(4-hydroxybenzyl)-6-(D-ribitylimino)-5,6-dihydrouracil. This chain is 7,8-didemethyl-8-hydroxy-5-deazariboflavin synthase, found in Halobacterium salinarum (strain ATCC 29341 / DSM 671 / R1).